Here is a 120-residue protein sequence, read N- to C-terminus: Large ribosomal subunit protein bL20 (120 aa).

This sequence belongs to the bacterial ribosomal protein bL20 family.

Functionally, binds directly to 23S ribosomal RNA and is necessary for the in vitro assembly process of the 50S ribosomal subunit. It is not involved in the protein synthesizing functions of that subunit. The polypeptide is Large ribosomal subunit protein bL20 (Ureaplasma urealyticum serovar 10 (strain ATCC 33699 / Western)).